The following is a 339-amino-acid chain: Lipoate-protein ligase A (339 aa).

In terms of domain architecture, BPL/LPL catalytic spans Asn-28–Asp-211. Residues Arg-70, Gly-75–Phe-78, and Lys-129 contribute to the ATP site. Residue Lys-129 coordinates (R)-lipoate.

Belongs to the LplA family. Monomer.

It is found in the cytoplasm. The catalysed reaction is L-lysyl-[lipoyl-carrier protein] + (R)-lipoate + ATP = N(6)-[(R)-lipoyl]-L-lysyl-[lipoyl-carrier protein] + AMP + diphosphate + H(+). It participates in protein modification; protein lipoylation via exogenous pathway; protein N(6)-(lipoyl)lysine from lipoate: step 1/2. It functions in the pathway protein modification; protein lipoylation via exogenous pathway; protein N(6)-(lipoyl)lysine from lipoate: step 2/2. In terms of biological role, catalyzes both the ATP-dependent activation of exogenously supplied lipoate to lipoyl-AMP and the transfer of the activated lipoyl onto the lipoyl domains of lipoate-dependent enzymes. The protein is Lipoate-protein ligase A of Psychrobacter cryohalolentis (strain ATCC BAA-1226 / DSM 17306 / VKM B-2378 / K5).